The sequence spans 273 residues: Tyrosinase (273 aa).

Histidine 38, histidine 54, histidine 63, histidine 190, histidine 194, and histidine 216 together coordinate Cu cation.

This sequence belongs to the tyrosinase family. Cu(2+) is required as a cofactor.

It catalyses the reaction 2 L-dopa + O2 = 2 L-dopaquinone + 2 H2O. It carries out the reaction L-tyrosine + O2 = L-dopaquinone + H2O. Functionally, this is a copper-containing oxidase that functions in the formation of pigments such as melanins and other polyphenolic compounds. In Streptomyces antibioticus, this protein is Tyrosinase (melC2).